Here is a 240-residue protein sequence, read N- to C-terminus: Acyl-protein thioesterase 1 (240 aa).

Residues serine 129, aspartate 183, and histidine 219 each act as charge relay system in the active site.

The protein belongs to the AB hydrolase superfamily. AB hydrolase 2 family.

It is found in the cytoplasm. Its subcellular location is the nucleus. The enzyme catalyses S-hexadecanoyl-L-cysteinyl-[protein] + H2O = L-cysteinyl-[protein] + hexadecanoate + H(+). Its function is as follows. Hydrolyzes fatty acids from S-acylated cysteine residues in proteins with a strong preference for palmitoylated G-alpha proteins over other acyl substrates. Mediates the deacylation of G-alpha proteins such as GPA1 in vivo, but has weak or no activity toward palmitoylated Ras proteins. Has weak lysophospholipase activity in vitro; however such activity may not exist in vivo. The polypeptide is Acyl-protein thioesterase 1 (Mycosarcoma maydis (Corn smut fungus)).